We begin with the raw amino-acid sequence, 87 residues long: uncharacterized protein (87 aa).

Residues 44 to 64 (DALYLAGSTIFTIVTTLVAWF) form a helical membrane-spanning segment.

The protein belongs to the SPP1 holin family.

It is found in the membrane. This is an uncharacterized protein from Bacillus licheniformis.